Consider the following 4830-residue polypeptide: Siderophore peptide synthetase fer3 (4830 aa).

The tract at residues 197-623 (LDQAEKFPDR…LGRMNAEQVK (427 aa)) is adenylation 1. The Carrier 1 domain occupies 751–833 (ANEDPVTQAL…DLIPLLSDTT (83 aa)). Serine 788 is modified (O-(pantetheine 4'-phosphoryl)serine). Residues 879-1317 (QKIFPTTATQ…HSLMREPETT (439 aa)) are condensation 1. Residues 1358-1781 (FENKAATEPE…IGRRDDLVKL (424 aa)) form an adenylation 2 region. The region spanning 1929-2005 (GEDGDLQCQV…MLIRGLATKT (77 aa)) is the Carrier 2 domain. Position 1966 is an O-(pantetheine 4'-phosphoryl)serine (serine 1966). The segment at 2048–2503 (IPCSTLQEGM…LLDQVVSLLT (456 aa)) is condensation 2. Residues 2573 to 2977 (AGTPETACIN…LGRRDEQEKI (405 aa)) form an adenylation 3 region. Positions 3122-3198 (RPLSSLEREI…DIAAELSDSK (77 aa)) constitute a Carrier 3 domain. Serine 3159 bears the O-(pantetheine 4'-phosphoryl)serine mark. A condensation 3 region spans residues 3232–3621 (KVLPCLPSQE…RDRDELRISA (390 aa)). The Carrier 4 domain maps to 3685–3760 (TAAEEQIRDL…GLSKLLDQRQ (76 aa)). Residue serine 3720 is modified to O-(pantetheine 4'-phosphoryl)serine. Positions 3779-4199 (RYKATPLQAG…GVQIKAGASD (421 aa)) are condensation 4. The region spanning 4264-4340 (SLSTAEQDIV…RLTVATETRS (77 aa)) is the Carrier 5 domain. Serine 4301 carries the O-(pantetheine 4'-phosphoryl)serine modification. The tract at residues 4381 to 4708 (VLPLLTGQQQ…DLVSRAEHQQ (328 aa)) is condensation 5.

It belongs to the NRP synthetase family.

The protein operates within siderophore biosynthesis. In terms of biological role, nonribosomal peptide synthetase; part of the gene cluster that mediates the biosynthesis of siderophore ferrichrome A which is contributing to organismal virulence. The first step of ferrichrome A biosynthesis is performed by the HMG-CoA synthase hcs1 which catalyzes the generation of HMG-CoA and CoA using acetoacetyl-CoA and acetyl-CoA as substrates. The enoyl-CoA isomerase/hydratase fer4 then catalyzes the conversion of hcs1-produced HMG-CoA to methylglutaconyl-CoA. The acyltransferase fer5 then fuses the fer4-generated methylglutaconyl-CoA with sid1-generated hydroxyornithine to yield methylglutaconyl hydroxyornithine. Methylglutaconyl hydroxyornithine is then available for use by the NRPS fer3 to generate ferrichrome A. The protein is Siderophore peptide synthetase fer3 of Mycosarcoma maydis (Corn smut fungus).